The primary structure comprises 286 residues: Phosphatidylglycerol--prolipoprotein diacylglyceryl transferase (286 aa).

Transmembrane regions (helical) follow at residues 29–49 (IHWY…VGTY), 66–86 (LVFY…VFFY), 101–121 (VWEG…AMML), 130–150 (FLDL…LGRI), 181–201 (PSQL…LFWF), 209–229 (AAVA…VEFV), and 250–270 (LSLP…RHPA). R149 lines the a 1,2-diacyl-sn-glycero-3-phospho-(1'-sn-glycerol) pocket.

This sequence belongs to the Lgt family.

Its subcellular location is the cell inner membrane. The enzyme catalyses L-cysteinyl-[prolipoprotein] + a 1,2-diacyl-sn-glycero-3-phospho-(1'-sn-glycerol) = an S-1,2-diacyl-sn-glyceryl-L-cysteinyl-[prolipoprotein] + sn-glycerol 1-phosphate + H(+). The protein operates within protein modification; lipoprotein biosynthesis (diacylglyceryl transfer). Catalyzes the transfer of the diacylglyceryl group from phosphatidylglycerol to the sulfhydryl group of the N-terminal cysteine of a prolipoprotein, the first step in the formation of mature lipoproteins. In Teredinibacter turnerae (strain ATCC 39867 / T7901), this protein is Phosphatidylglycerol--prolipoprotein diacylglyceryl transferase.